The primary structure comprises 395 residues: Leucine aminopeptidase 1 (395 aa).

Positions Met1 to Ala19 are cleaved as a signal peptide. A propeptide spanning residues Gly20–Val95 is cleaved from the precursor. Asn187 carries an N-linked (GlcNAc...) asparagine glycan. Positions 195, 214, 253, and 280 each coordinate Zn(2+). Cysteines 329 and 333 form a disulfide. A Zn(2+)-binding site is contributed by His362.

The protein belongs to the peptidase M28 family. M28E subfamily. As to quaternary structure, monomer. It depends on Zn(2+) as a cofactor.

It localises to the secreted. Its function is as follows. Extracellular aminopeptidase that allows assimilation of proteinaceous substrates. This is Leucine aminopeptidase 1 (LAP1) from Uncinocarpus reesii (strain UAMH 1704).